Here is a 260-residue protein sequence, read N- to C-terminus: Cytochrome c oxidase subunit 3 (260 aa).

6 helical membrane-spanning segments follow: residues 30–50 (LILWFHINSTILFILGTVLLV), 81–101 (GMILFITSEVCLFFAFFWAFF), 126–146 (FLVPLLNTAVLLSSGVTVTWA), 158–178 (AIQSLTLTVFLGVYFTILQAW), 196–216 (FFVATGFHGLHVLIGTAFLAV), and 239–259 (WYWHFVDVVWLFLYICIYWWG).

Belongs to the cytochrome c oxidase subunit 3 family. Component of the cytochrome c oxidase (complex IV, CIV), a multisubunit enzyme composed of a catalytic core of 3 subunits and several supernumerary subunits. The complex exists as a monomer or a dimer and forms supercomplexes (SCs) in the inner mitochondrial membrane with ubiquinol-cytochrome c oxidoreductase (cytochrome b-c1 complex, complex III, CIII).

Its subcellular location is the mitochondrion inner membrane. The catalysed reaction is 4 Fe(II)-[cytochrome c] + O2 + 8 H(+)(in) = 4 Fe(III)-[cytochrome c] + 2 H2O + 4 H(+)(out). In terms of biological role, component of the cytochrome c oxidase, the last enzyme in the mitochondrial electron transport chain which drives oxidative phosphorylation. The respiratory chain contains 3 multisubunit complexes succinate dehydrogenase (complex II, CII), ubiquinol-cytochrome c oxidoreductase (cytochrome b-c1 complex, complex III, CIII) and cytochrome c oxidase (complex IV, CIV), that cooperate to transfer electrons derived from NADH and succinate to molecular oxygen, creating an electrochemical gradient over the inner membrane that drives transmembrane transport and the ATP synthase. Cytochrome c oxidase is the component of the respiratory chain that catalyzes the reduction of oxygen to water. Electrons originating from reduced cytochrome c in the intermembrane space (IMS) are transferred via the dinuclear copper A center (CU(A)) of subunit 2 and heme A of subunit 1 to the active site in subunit 1, a binuclear center (BNC) formed by heme A3 and copper B (CU(B)). The BNC reduces molecular oxygen to 2 water molecules using 4 electrons from cytochrome c in the IMS and 4 protons from the mitochondrial matrix. This Pisaster ochraceus (Ochre sea star) protein is Cytochrome c oxidase subunit 3 (COIII).